We begin with the raw amino-acid sequence, 338 residues long: Tryptophan--tRNA ligase (338 aa).

ATP-binding positions include 18-20 (QPS) and 26-27 (GN). The short motif at 19–27 (PSGNLTIGN) is the 'HIGH' region element. Asp142 is an L-tryptophan binding site. Residues 154–156 (GND), Ile193, and 202–206 (KMSKS) each bind ATP. Residues 202–206 (KMSKS) carry the 'KMSKS' region motif.

The protein belongs to the class-I aminoacyl-tRNA synthetase family. As to quaternary structure, homodimer.

The protein resides in the cytoplasm. It carries out the reaction tRNA(Trp) + L-tryptophan + ATP = L-tryptophyl-tRNA(Trp) + AMP + diphosphate + H(+). In terms of biological role, catalyzes the attachment of tryptophan to tRNA(Trp). This is Tryptophan--tRNA ligase from Clostridium tetani (strain Massachusetts / E88).